The primary structure comprises 73 residues: Sec-independent protein translocase protein TatA (73 aa).

The helical transmembrane segment at 1 to 21 (MGSFSIWHWVIVLVVVVLIFG) threads the bilayer. A disordered region spans residues 43-73 (MKSEGEDAAQTPPAAQKEGGRVIDAEPADKK). A compositionally biased stretch (basic and acidic residues) spans 60-73 (EGGRVIDAEPADKK).

Belongs to the TatA/E family. As to quaternary structure, the Tat system comprises two distinct complexes: a TatABC complex, containing multiple copies of TatA, TatB and TatC subunits, and a separate TatA complex, containing only TatA subunits. Substrates initially bind to the TatABC complex, which probably triggers association of the separate TatA complex to form the active translocon.

Its subcellular location is the cell inner membrane. Functionally, part of the twin-arginine translocation (Tat) system that transports large folded proteins containing a characteristic twin-arginine motif in their signal peptide across membranes. TatA could form the protein-conducting channel of the Tat system. This is Sec-independent protein translocase protein TatA from Laribacter hongkongensis (strain HLHK9).